Here is a 261-residue protein sequence, read N- to C-terminus: MRVLLTNDDGFDSVGMRVLRDVVSGHFAEVWVSAPARDCSAASRALSVRTPIKTHMRGEREFVVHGTPADSAVIGICEMTSTGKRPDLVISGINYGANTGFTVPYSGTIAAAAAAFDIGVPAIAISQQYNGKRCDNNVETSWQNSRKSVMALVSRLLRDTMWHGKCVMSINVPYSDVQGVKFAGHSCDDGHIKWDGPSMERREITSGDGRCVSYVFDDMRSPNSNDNASDTQLLEQGYIVVTPIGHSMTDHAILDKYCGLQ.

Residues Asp8, Asp9, Ser40, and Asn94 each coordinate a divalent metal cation.

This sequence belongs to the SurE nucleotidase family. It depends on a divalent metal cation as a cofactor.

The protein resides in the cytoplasm. The enzyme catalyses a ribonucleoside 5'-phosphate + H2O = a ribonucleoside + phosphate. Functionally, nucleotidase that shows phosphatase activity on nucleoside 5'-monophosphates. The protein is 5'-nucleotidase SurE of Anaplasma marginale (strain St. Maries).